Consider the following 386-residue polypeptide: Patatin-T5 (386 aa).

The signal sequence occupies residues Met1–Ala23. Positions Leu32–Ile229 constitute a PNPLA domain. The GXGXXG motif lies at Gly36–Gly41. Asn60 carries N-linked (GlcNAc...) asparagine glycosylation. A GXSXG motif is present at residues Gly75–Gly79. The active-site Nucleophile is the Ser77. Residues Asn90 and Asn202 are each glycosylated (N-linked (GlcNAc...) asparagine). The active-site Proton acceptor is the Asp215. The DGA/G motif lies at Asp215–Ala217.

This sequence belongs to the patatin family. N-glycosylated. As to expression, tuber and stolon.

The protein localises to the vacuole. In terms of biological role, probable lipolytic acyl hydrolase (LAH), an activity which is thought to be involved in the response of tubers to pathogens. The protein is Patatin-T5 of Solanum tuberosum (Potato).